Consider the following 147-residue polypeptide: Plasminogen receptor (KT) (147 aa).

Over 1–52 (MGFIFSKSMNENMKNQQEFMVMHARLQLERQLIMQNEMRERQMAMQIAWSRE) the chain is Extracellular. Residues 53-73 (FLKYFGTFFGIATISLAAGAI) traverse the membrane as a helical segment. Topologically, residues 74–78 (KRKKP) are cytoplasmic. Residues 79–99 (AFLIPIVPLSFIFTYQYDLGY) form a helical membrane-spanning segment. At 100–147 (GTLLQRMKSEAEDILETEKTKLELPKGLITFESLEKARREQSKFFSDK) the chain is on the extracellular side.

In terms of assembly, interacts with PLAT. Interacts with PLAUR. As to expression, expressed in adrenal medulla (pheochromocytoma).

The protein localises to the cell membrane. In terms of biological role, receptor for plasminogen. Regulates urokinase plasminogen activator-dependent and stimulates tissue-type plasminogen activator-dependent cell surface plasminogen activation. Proposed to be part of a local catecholaminergic cell plasminogen activation system that regulates neuroendocrine prohormone processing. Involved in regulation of inflammatory response; regulates monocyte chemotactic migration and matrix metalloproteinase activation, such as of MMP2 and MMP9. The chain is Plasminogen receptor (KT) (Plgrkt) from Rattus norvegicus (Rat).